Consider the following 654-residue polypeptide: Fructose-1,6-bisphosphatase class 3 (654 aa).

The segment at 288-307 is disordered; the sequence is NPAFKPKKRPDKHERLTQRE. The segment covering 298 to 307 has biased composition (basic and acidic residues); it reads DKHERLTQRE.

The protein belongs to the FBPase class 3 family. Mn(2+) serves as cofactor.

It catalyses the reaction beta-D-fructose 1,6-bisphosphate + H2O = beta-D-fructose 6-phosphate + phosphate. The protein operates within carbohydrate biosynthesis; gluconeogenesis. The protein is Fructose-1,6-bisphosphatase class 3 of Staphylococcus aureus (strain bovine RF122 / ET3-1).